The sequence spans 348 residues: MAKKSLILLYGGRSAEREVSVLSAESVMRAINYDLFSVKTYFITKEGDFIKTQEFSSKPAEDVRLMTNDTVDMSRKIKPSDIYEEGAVVFPVLHGPMGEDGSIQGFLEVLKMPYVGCNILSSSLAMDKITTKRVLESAGIAQVPYVALVDGEDLEQKIQEIEEKLSYPVFTKPSNMGSSVGISKSDNQEELRASLDLAFKYDSRVLVEQGVTAREIEVGLLGNADVKSSLPGEVVKDVAFYDYQAKYIDNKITMAIPAQLPEGVVNTMRQNAEIAFRAIGGLGLSRCDFFYTEDGQVFLNELNTMPGFTQWSMYPLLWENMGLAYPDLIEKLVALAEEAFAKREAHLL.

Residues 132-334 (KRVLESAGIA…YPDLIEKLVA (203 aa)) enclose the ATP-grasp domain. 162 to 217 (EEKLSYPVFTKPSNMGSSVGISKSDNQEELRASLDLAFKYDSRVLVEQGVTAREIE) provides a ligand contact to ATP. Mg(2+) contacts are provided by aspartate 288, glutamate 301, and asparagine 303.

It belongs to the D-alanine--D-alanine ligase family. The cofactor is Mg(2+). Mn(2+) is required as a cofactor.

It is found in the cytoplasm. It catalyses the reaction 2 D-alanine + ATP = D-alanyl-D-alanine + ADP + phosphate + H(+). The protein operates within cell wall biogenesis; peptidoglycan biosynthesis. Cell wall formation. This Streptococcus gordonii (strain Challis / ATCC 35105 / BCRC 15272 / CH1 / DL1 / V288) protein is D-alanine--D-alanine ligase.